Here is a 319-residue protein sequence, read N- to C-terminus: Annexin A5 (319 aa).

An N-acetylalanine modification is found at Ala-2. Annexin repeat units lie at residues Phe-13–Lys-84, Pro-85–Gln-156, Ala-168–Lys-240, and Ser-244–Gly-315. Lys-27 participates in a covalent cross-link: Glycyl lysine isopeptide (Lys-Gly) (interchain with G-Cter in SUMO1); alternate. A Glycyl lysine isopeptide (Lys-Gly) (interchain with G-Cter in SUMO2); alternate cross-link involves residue Lys-27. At Ser-35 the chain carries Phosphoserine. Residues Lys-68, Lys-74, Lys-77, Lys-95, and Lys-99 each carry the N6-acetyllysine modification. Position 288 is an N6-succinyllysine (Lys-288). The [IL]-x-C-x-x-[DE] motif signature appears at Leu-312 to Asp-318.

It belongs to the annexin family. As to quaternary structure, monomer. Binds ATRX and EIF5B. Post-translationally, S-nitrosylation is induced by interferon-gamma and oxidatively-modified low-densitity lipoprotein (LDL(ox)) possibly implicating the iNOS-S100A8/9 transnitrosylase complex.

This protein is an anticoagulant protein that acts as an indirect inhibitor of the thromboplastin-specific complex, which is involved in the blood coagulation cascade. In Mus musculus (Mouse), this protein is Annexin A5 (Anxa5).